Here is a 283-residue protein sequence, read N- to C-terminus: Urease accessory protein UreD (283 aa).

The disordered stretch occupies residues 1–21 (MTQTQPVGTLRLTIDDQGPQG).

It belongs to the UreD family. UreD, UreF and UreG form a complex that acts as a GTP-hydrolysis-dependent molecular chaperone, activating the urease apoprotein by helping to assemble the nickel containing metallocenter of UreC. The UreE protein probably delivers the nickel.

It is found in the cytoplasm. Its function is as follows. Probably acts in the maturation of urease via the functional incorporation of the urease nickel metallocenter. Required for urease expression. This chain is Urease accessory protein UreD, found in Corynebacterium glutamicum (strain ATCC 13032 / DSM 20300 / JCM 1318 / BCRC 11384 / CCUG 27702 / LMG 3730 / NBRC 12168 / NCIMB 10025 / NRRL B-2784 / 534).